Consider the following 385-residue polypeptide: Succinyl-diaminopimelate desuccinylase (385 aa).

Zn(2+) is bound at residue His73. Asp75 is a catalytic residue. Asp106 is a Zn(2+) binding site. Catalysis depends on Glu141, which acts as the Proton acceptor. Positions 142, 170, and 359 each coordinate Zn(2+).

It belongs to the peptidase M20A family. DapE subfamily. As to quaternary structure, homodimer. Zn(2+) is required as a cofactor. Requires Co(2+) as cofactor.

It carries out the reaction N-succinyl-(2S,6S)-2,6-diaminopimelate + H2O = (2S,6S)-2,6-diaminopimelate + succinate. Its pathway is amino-acid biosynthesis; L-lysine biosynthesis via DAP pathway; LL-2,6-diaminopimelate from (S)-tetrahydrodipicolinate (succinylase route): step 3/3. Its function is as follows. Catalyzes the hydrolysis of N-succinyl-L,L-diaminopimelic acid (SDAP), forming succinate and LL-2,6-diaminopimelate (DAP), an intermediate involved in the bacterial biosynthesis of lysine and meso-diaminopimelic acid, an essential component of bacterial cell walls. In Methylorubrum extorquens (strain PA1) (Methylobacterium extorquens), this protein is Succinyl-diaminopimelate desuccinylase.